A 424-amino-acid chain; its full sequence is Riboflavin biosynthesis protein RibBA (424 aa).

Positions 1-204 (MTRFDSIERA…IADLIAWRRK (204 aa)) are DHBP synthase. D-ribulose 5-phosphate is bound by residues 28–29 (RE), Asp-33, 141–145 (RPGHT), and Glu-165. Residue Glu-29 participates in Mg(2+) binding. His-144 serves as a coordination point for Mg(2+). Positions 205–424 (HEKHVLRIAE…QNTAQPGTAL (220 aa)) are GTP cyclohydrolase II. GTP is bound at residue 259–263 (RVHSE). Cys-264, Cys-275, and Cys-277 together coordinate Zn(2+). Residues Gln-280, 303–305 (EGR), and Thr-325 each bind GTP. Asp-337 functions as the Proton acceptor; for GTP cyclohydrolase activity in the catalytic mechanism. The Nucleophile; for GTP cyclohydrolase activity role is filled by Arg-339. GTP contacts are provided by Thr-360 and Lys-365.

This sequence in the N-terminal section; belongs to the DHBP synthase family. In the C-terminal section; belongs to the GTP cyclohydrolase II family. Mg(2+) serves as cofactor. It depends on Mn(2+) as a cofactor. The cofactor is Zn(2+).

The enzyme catalyses D-ribulose 5-phosphate = (2S)-2-hydroxy-3-oxobutyl phosphate + formate + H(+). The catalysed reaction is GTP + 4 H2O = 2,5-diamino-6-hydroxy-4-(5-phosphoribosylamino)-pyrimidine + formate + 2 phosphate + 3 H(+). It participates in cofactor biosynthesis; riboflavin biosynthesis; 2-hydroxy-3-oxobutyl phosphate from D-ribulose 5-phosphate: step 1/1. It functions in the pathway cofactor biosynthesis; riboflavin biosynthesis; 5-amino-6-(D-ribitylamino)uracil from GTP: step 1/4. Its function is as follows. Catalyzes the conversion of D-ribulose 5-phosphate to formate and 3,4-dihydroxy-2-butanone 4-phosphate. Functionally, catalyzes the conversion of GTP to 2,5-diamino-6-ribosylamino-4(3H)-pyrimidinone 5'-phosphate (DARP), formate and pyrophosphate. This is Riboflavin biosynthesis protein RibBA from Rhodococcus erythropolis (strain PR4 / NBRC 100887).